The chain runs to 488 residues: Protein Notchless (488 aa).

The disordered stretch occupies residues 1 to 22; the sequence is MLAKKQKMQETDTEQEATPHTI. Positions 19–101 are ubiquitin-like (UBL) domain; that stretch reads PHTIQARLVS…VIDIVYQPQA (83 aa). WD repeat units follow at residues 117–156, 159–198, 202–246, 249–287, 329–370, 373–412, 415–454, and 457–488; these read GHAE…PHFT, GHKQ…QKGR, GHKK…CLMN, GHTN…LCRT, LQES…CVER, GHQN…YMAT, GHVQ…LAQE, and GHAD…LWAY.

The protein belongs to the NLE1/RSA4 family. In terms of assembly, interacts with Notch (via cytoplasmic domain). Associates with the pre-60S ribosomal particle.

Its subcellular location is the nucleus. It is found in the nucleolus. Plays a role in regulating Notch activity. The protein is Protein Notchless of Drosophila melanogaster (Fruit fly).